Reading from the N-terminus, the 127-residue chain is Large ribosomal subunit protein bL17 (127 aa).

The protein belongs to the bacterial ribosomal protein bL17 family. As to quaternary structure, part of the 50S ribosomal subunit. Contacts protein L32.

This Haemophilus ducreyi (strain 35000HP / ATCC 700724) protein is Large ribosomal subunit protein bL17.